A 359-amino-acid polypeptide reads, in one-letter code: tRNA-specific 2-thiouridylase MnmA (359 aa).

Residues 6–13 (AMSGGVDS) and Leu-32 contribute to the ATP site. The Nucleophile role is filled by Cys-101. The cysteines at positions 101 and 193 are disulfide-linked. An ATP-binding site is contributed by Gly-125. Residues 143–145 (KDQ) form an interaction with tRNA region. Catalysis depends on Cys-193, which acts as the Cysteine persulfide intermediate.

The protein belongs to the MnmA/TRMU family.

It localises to the cytoplasm. It carries out the reaction S-sulfanyl-L-cysteinyl-[protein] + uridine(34) in tRNA + AH2 + ATP = 2-thiouridine(34) in tRNA + L-cysteinyl-[protein] + A + AMP + diphosphate + H(+). Functionally, catalyzes the 2-thiolation of uridine at the wobble position (U34) of tRNA, leading to the formation of s(2)U34. This Mycobacterium sp. (strain KMS) protein is tRNA-specific 2-thiouridylase MnmA.